A 357-amino-acid chain; its full sequence is 4-hydroxy-3-methylbut-2-en-1-yl diphosphate synthase (flavodoxin) (357 aa).

[4Fe-4S] cluster is bound by residues Cys-264, Cys-267, Cys-299, and Glu-306.

Belongs to the IspG family. The cofactor is [4Fe-4S] cluster.

It catalyses the reaction (2E)-4-hydroxy-3-methylbut-2-enyl diphosphate + oxidized [flavodoxin] + H2O + 2 H(+) = 2-C-methyl-D-erythritol 2,4-cyclic diphosphate + reduced [flavodoxin]. It functions in the pathway isoprenoid biosynthesis; isopentenyl diphosphate biosynthesis via DXP pathway; isopentenyl diphosphate from 1-deoxy-D-xylulose 5-phosphate: step 5/6. Converts 2C-methyl-D-erythritol 2,4-cyclodiphosphate (ME-2,4cPP) into 1-hydroxy-2-methyl-2-(E)-butenyl 4-diphosphate. This chain is 4-hydroxy-3-methylbut-2-en-1-yl diphosphate synthase (flavodoxin), found in Campylobacter jejuni (strain RM1221).